Here is a 142-residue protein sequence, read N- to C-terminus: Large ribosomal subunit protein uL13 (142 aa).

Belongs to the universal ribosomal protein uL13 family. Part of the 50S ribosomal subunit.

Functionally, this protein is one of the early assembly proteins of the 50S ribosomal subunit, although it is not seen to bind rRNA by itself. It is important during the early stages of 50S assembly. The chain is Large ribosomal subunit protein uL13 from Histophilus somni (strain 2336) (Haemophilus somnus).